Here is a 283-residue protein sequence, read N- to C-terminus: Alkaline ceramidase (283 aa).

The Ca(2+) site is built by aspartate 28, tryptophan 29, glutamate 31, asparagine 33, and glutamate 42. Helical transmembrane passes span 43–63 (FVNT…IMLF) and 69–89 (FVTP…LSSM). Histidine 92 is a Zn(2+) binding site. The next 4 helical transmembrane spans lie at 98–118 (IGQL…FSLF), 134–151 (TFSW…GLSW), 154–174 (PIVN…MLYT), and 187–209 (LGIR…RIFC). Residues histidine 221 and histidine 225 each contribute to the Zn(2+) site. The chain crosses the membrane as a helical span at residues 222–242 (GFWHIFIFIAAYTVLVLFAYF).

This sequence belongs to the alkaline ceramidase family. Zn(2+) is required as a cofactor. In terms of tissue distribution, expressed in the central midgut of late embryos. In brain, it is present at the interhemispheric junction and in groups of cells in the central brain.

It localises to the membrane. It catalyses the reaction an N-acylsphing-4-enine + H2O = sphing-4-enine + a fatty acid. Its function is as follows. Hydrolyzes the sphingolipid ceramide into sphingosine and free fatty acid. The polypeptide is Alkaline ceramidase (bwa) (Drosophila melanogaster (Fruit fly)).